Reading from the N-terminus, the 136-residue chain is MLFSLLELVQWLGFAQLEIFLHIWALLVFTVLLALKADGFAPDMSWWNIFIPFFTADGLSTYFTTIVTVRLFQDGEKRQAVLRLFWILTILSLKFVFEMLLCQKLVEQSRELWFGLIMSPVFILLQLLMIRACRVN.

The next 4 membrane-spanning stretches (helical) occupy residues 14–34, 50–72, 81–101, and 112–132; these read FAQLEIFLHIWALLVFTVLLA, FIPFFTADGLSTYFTTIVTVRLF, VLRLFWILTILSLKFVFEMLL, and LWFGLIMSPVFILLQLLMIRA.

It is found in the endoplasmic reticulum membrane. The protein resides in the endoplasmic reticulum-Golgi intermediate compartment. Its function is as follows. Involved in the regulation of cellular calcium homeotasis. May act as a regulator of STING-mediated inflammatory signaling in macrophages. This Xenopus tropicalis (Western clawed frog) protein is Transmembrane protein 203 (tmem203).